Consider the following 106-residue polypeptide: Large ribosomal subunit protein uL24 (106 aa).

The protein belongs to the universal ribosomal protein uL24 family. In terms of assembly, part of the 50S ribosomal subunit.

One of two assembly initiator proteins, it binds directly to the 5'-end of the 23S rRNA, where it nucleates assembly of the 50S subunit. Functionally, one of the proteins that surrounds the polypeptide exit tunnel on the outside of the subunit. This is Large ribosomal subunit protein uL24 from Clostridium acetobutylicum (strain ATCC 824 / DSM 792 / JCM 1419 / IAM 19013 / LMG 5710 / NBRC 13948 / NRRL B-527 / VKM B-1787 / 2291 / W).